The following is a 77-amino-acid chain: ATP synthase subunit 9, mitochondrial (77 aa).

Transmembrane regions (helical) follow at residues M8 to L28 and L45 to F72.

It belongs to the ATPase C chain family. As to quaternary structure, F-type ATPases have 2 components, CF(1) - the catalytic core - and CF(0) - the membrane proton channel. CF(1) has five subunits: alpha(3), beta(3), gamma(1), delta(1), epsilon(1). CF(0) has three main subunits: a, b and c.

Its subcellular location is the mitochondrion membrane. This protein is one of the chains of the nonenzymatic membrane component (F0) of mitochondrial ATPase. The polypeptide is ATP synthase subunit 9, mitochondrial (ATP9) (Petunia sp. (Petunia)).